A 429-amino-acid chain; its full sequence is Tyrosine--tRNA ligase (429 aa).

Residue Y36 participates in L-tyrosine binding. Residues 41–50 (PTAASLHAGH) carry the 'HIGH' region motif. Residues Y171 and Q175 each coordinate L-tyrosine. A 'KMSKS' region motif is present at residues 231 to 235 (KFGKS). K234 is an ATP binding site. The S4 RNA-binding domain maps to 360–417 (ATIVDLLVATGLAESRGAARRTVNEGGAAVNNQKIADPDWTPADGDYLHGRWLVVRRG).

It belongs to the class-I aminoacyl-tRNA synthetase family. TyrS type 1 subfamily. As to quaternary structure, homodimer.

The protein resides in the cytoplasm. The catalysed reaction is tRNA(Tyr) + L-tyrosine + ATP = L-tyrosyl-tRNA(Tyr) + AMP + diphosphate + H(+). Its function is as follows. Catalyzes the attachment of tyrosine to tRNA(Tyr) in a two-step reaction: tyrosine is first activated by ATP to form Tyr-AMP and then transferred to the acceptor end of tRNA(Tyr). The polypeptide is Tyrosine--tRNA ligase (Nocardia farcinica (strain IFM 10152)).